The following is a 264-amino-acid chain: Phosphatidylinositol transfer protein 1 (264 aa).

Residues 151–174 (NYKETEDPTKIRSEKANRGPLEEE) form a disordered region. The stretch at 238 to 264 (VRAFELKTKEDLKKKLEEKDENKAAEK) forms a coiled coil.

The protein belongs to the PtdIns transfer protein family. PI transfer class I subfamily. Post-translationally, phosphorylated in response to activation of rasG.

Its subcellular location is the cytoplasm. It localises to the golgi apparatus. In terms of biological role, catalyzes the transfer of PtdIns and phosphatidylcholine between membranes. This chain is Phosphatidylinositol transfer protein 1 (pitA), found in Dictyostelium discoideum (Social amoeba).